The following is a 359-amino-acid chain: Elongation factor Ts 1, mitochondrial (359 aa).

The span at 323-341 (GKAAPAPKAEEPAAVAPAK) shows a compositional bias: low complexity. The interval 323 to 345 (GKAAPAPKAEEPAAVAPAKADAE) is disordered.

The protein belongs to the EF-Ts family.

It localises to the mitochondrion. Associates with the EF-Tu.GDP complex and induces the exchange of GDP to GTP. It remains bound to the aminoacyl-tRNA.EF-Tu.GTP complex up to the GTP hydrolysis stage on the ribosome. This chain is Elongation factor Ts 1, mitochondrial, found in Thalassiosira pseudonana (Marine diatom).